We begin with the raw amino-acid sequence, 471 residues long: Tryptophanase (471 aa).

3 positions are modified to N6-acetyllysine: K5, K115, and K156. The residue at position 270 (K270) is an N6-(pyridoxal phosphate)lysine. K450 is subject to N6-acetyllysine.

This sequence belongs to the beta-eliminating lyase family. Homotetramer. Pyridoxal 5'-phosphate serves as cofactor.

The enzyme catalyses L-tryptophan + H2O = indole + pyruvate + NH4(+). The protein operates within amino-acid degradation; L-tryptophan degradation via pyruvate pathway; indole and pyruvate from L-tryptophan: step 1/1. In Escherichia coli (strain SMS-3-5 / SECEC), this protein is Tryptophanase.